The following is a 250-amino-acid chain: Ubiquinone/menaquinone biosynthesis C-methyltransferase UbiE (250 aa).

Residues threonine 73, aspartate 94, and 122-123 contribute to the S-adenosyl-L-methionine site; that span reads DA.

It belongs to the class I-like SAM-binding methyltransferase superfamily. MenG/UbiE family.

It catalyses the reaction a 2-demethylmenaquinol + S-adenosyl-L-methionine = a menaquinol + S-adenosyl-L-homocysteine + H(+). The enzyme catalyses a 2-methoxy-6-(all-trans-polyprenyl)benzene-1,4-diol + S-adenosyl-L-methionine = a 5-methoxy-2-methyl-3-(all-trans-polyprenyl)benzene-1,4-diol + S-adenosyl-L-homocysteine + H(+). Its pathway is quinol/quinone metabolism; menaquinone biosynthesis; menaquinol from 1,4-dihydroxy-2-naphthoate: step 2/2. It participates in cofactor biosynthesis; ubiquinone biosynthesis. Methyltransferase required for the conversion of demethylmenaquinol (DMKH2) to menaquinol (MKH2) and the conversion of 2-polyprenyl-6-methoxy-1,4-benzoquinol (DDMQH2) to 2-polyprenyl-3-methyl-6-methoxy-1,4-benzoquinol (DMQH2). In Coxiella burnetii (strain RSA 493 / Nine Mile phase I), this protein is Ubiquinone/menaquinone biosynthesis C-methyltransferase UbiE.